The chain runs to 228 residues: Large ribosomal subunit protein uL3 (228 aa).

At Q151 the chain carries N5-methylglutamine.

It belongs to the universal ribosomal protein uL3 family. In terms of assembly, part of the 50S ribosomal subunit. Forms a cluster with proteins L14 and L19. In terms of processing, methylated by PrmB.

Functionally, one of the primary rRNA binding proteins, it binds directly near the 3'-end of the 23S rRNA, where it nucleates assembly of the 50S subunit. The protein is Large ribosomal subunit protein uL3 of Rhizobium meliloti (strain 1021) (Ensifer meliloti).